Reading from the N-terminus, the 828-residue chain is Leucine--tRNA ligase (828 aa).

The 'HIGH' region motif lies at Pro36 to His46. Residues Lys595 to Ser599 carry the 'KMSKS' region motif. Lys598 is a binding site for ATP.

The protein belongs to the class-I aminoacyl-tRNA synthetase family.

It localises to the cytoplasm. It catalyses the reaction tRNA(Leu) + L-leucine + ATP = L-leucyl-tRNA(Leu) + AMP + diphosphate. The protein is Leucine--tRNA ligase of Rickettsia typhi (strain ATCC VR-144 / Wilmington).